A 252-amino-acid polypeptide reads, in one-letter code: Ditrans,polycis-undecaprenyl-diphosphate synthase ((2E,6E)-farnesyl-diphosphate specific) (252 aa).

Aspartate 25 is a catalytic residue. Aspartate 25 serves as a coordination point for Mg(2+). Substrate contacts are provided by residues 26–29 (GNGR), tryptophan 30, arginine 38, histidine 42, and 70–72 (SSE). The active-site Proton acceptor is asparagine 73. The substrate site is built by tryptophan 74, arginine 76, and arginine 193. Residue histidine 198 coordinates Mg(2+). 199-201 (RIS) serves as a coordination point for substrate. Glutamate 212 contributes to the Mg(2+) binding site.

Belongs to the UPP synthase family. Homodimer. Mg(2+) is required as a cofactor.

It carries out the reaction 8 isopentenyl diphosphate + (2E,6E)-farnesyl diphosphate = di-trans,octa-cis-undecaprenyl diphosphate + 8 diphosphate. In terms of biological role, catalyzes the sequential condensation of isopentenyl diphosphate (IPP) with (2E,6E)-farnesyl diphosphate (E,E-FPP) to yield (2Z,6Z,10Z,14Z,18Z,22Z,26Z,30Z,34E,38E)-undecaprenyl diphosphate (di-trans,octa-cis-UPP). UPP is the precursor of glycosyl carrier lipid in the biosynthesis of bacterial cell wall polysaccharide components such as peptidoglycan and lipopolysaccharide. In Salmonella typhi, this protein is Ditrans,polycis-undecaprenyl-diphosphate synthase ((2E,6E)-farnesyl-diphosphate specific).